The chain runs to 428 residues: Maltoporin (428 aa).

The first 24 residues, 1–24 (MTTLRKLPIALAVAAGVLSTQAMA), serve as a signal peptide directing secretion.

It belongs to the porin LamB (TC 1.B.3) family. As to quaternary structure, homotrimer formed of three 18-stranded antiparallel beta-barrels, containing three independent channels.

It localises to the cell outer membrane. The catalysed reaction is beta-maltose(in) = beta-maltose(out). Functionally, involved in the transport of maltose and maltodextrins. The chain is Maltoporin from Yersinia enterocolitica serotype O:8 / biotype 1B (strain NCTC 13174 / 8081).